Reading from the N-terminus, the 1370-residue chain is Zinc finger MYM-type protein 3 (1370 aa).

Low complexity-rich tracts occupy residues methionine 1–proline 12 and proline 52–aspartate 61. 2 disordered regions span residues methionine 1–valine 72 and proline 90–glycine 301. Basic and acidic residues predominate over residues alanine 230–valine 253. Phosphoserine is present on residues serine 263 and serine 267. Acidic residues predominate over residues serine 263–phenylalanine 279. Glycyl lysine isopeptide (Lys-Gly) (interchain with G-Cter in SUMO2) cross-links involve residues lysine 308, lysine 320, and lysine 328. 9 consecutive MYM-type zinc fingers follow at residues glutamine 332–serine 366, histidine 378–valine 422, histidine 429–serine 464, lysine 477–leucine 511, serine 521–tyrosine 559, tyrosine 567–valine 604, phenylalanine 612–leucine 646, lysine 653–glutamate 692, and tryptophan 699–isoleucine 733. A Phosphoserine modification is found at serine 464. Polar residues predominate over residues asparagine 759–arginine 794. The segment at asparagine 759 to asparagine 830 is disordered. Residues lysine 778 and lysine 786 each participate in a glycyl lysine isopeptide (Lys-Gly) (interchain with G-Cter in SUMO2) cross-link. Threonine 795 is modified (phosphothreonine). Lysine 804 is covalently cross-linked (Glycyl lysine isopeptide (Lys-Gly) (interchain with G-Cter in SUMO2)). Pro residues predominate over residues alanine 815–threonine 826. Threonine 817 and threonine 826 each carry phosphothreonine. Glycyl lysine isopeptide (Lys-Gly) (interchain with G-Cter in SUMO2) cross-links involve residues lysine 847, lysine 861, lysine 920, and lysine 1275.

May be a component of a BHC histone deacetylase complex that contains HDAC1, HDAC2, HMG20B/BRAF35, KDM1A, RCOR1/CoREST, PHF21A/BHC80, ZMYM2, ZNF217, ZMYM3, GSE1 and GTF2I. In terms of tissue distribution, most abundant in brain, moderate in muscle and heart, low in other tissues except placenta.

The protein resides in the nucleus. Plays a role in the regulation of cell morphology and cytoskeletal organization. This chain is Zinc finger MYM-type protein 3 (ZMYM3), found in Homo sapiens (Human).